The following is a 267-amino-acid chain: Chlorophyll a-b binding protein 3B, chloroplastic (267 aa).

The transit peptide at 1-34 (MAASTMALSSSTFAGKAVKLSPSSSEISGNGRIT) directs the protein to the chloroplast. Residues 19–52 (KLSPSSSEISGNGRITMRKTAAKPKPASSGSPWX) are disordered. The chain crosses the membrane as a helical span at residues 153-173 (LVHAQSILAIWACQVVLMGAV). Valine 154, serine 158, glutamine 166, glutamate 174, arginine 177, and leucine 183 together coordinate chlorophyll b. Chlorophyll a contacts are provided by lysine 214, glutamate 215, asparagine 218, arginine 220, glutamine 232, histidine 247, and alanine 256. A helical transmembrane segment spans residues 221–241 (LAMFSMFGFFVQAIVTGKGPL). Residue phenylalanine 263 coordinates chlorophyll b.

This sequence belongs to the light-harvesting chlorophyll a/b-binding (LHC) protein family. The LHC complex consists of chlorophyll a-b binding proteins. The cofactor is Binds at least 14 chlorophylls (8 Chl-a and 6 Chl-b) and carotenoids such as lutein and neoxanthin.. Photoregulated by reversible phosphorylation of its threonine residues.

The protein resides in the plastid. The protein localises to the chloroplast thylakoid membrane. Its function is as follows. The light-harvesting complex (LHC) functions as a light receptor, it captures and delivers excitation energy to photosystems with which it is closely associated. This chain is Chlorophyll a-b binding protein 3B, chloroplastic (CAB3B), found in Solanum lycopersicum (Tomato).